The following is a 321-amino-acid chain: Coproporphyrin III ferrochelatase (321 aa).

The Fe(2+) site is built by histidine 185 and glutamate 267.

It belongs to the ferrochelatase family.

The protein localises to the cytoplasm. It catalyses the reaction Fe-coproporphyrin III + 2 H(+) = coproporphyrin III + Fe(2+). The protein operates within porphyrin-containing compound metabolism; protoheme biosynthesis. In terms of biological role, involved in coproporphyrin-dependent heme b biosynthesis. Catalyzes the insertion of ferrous iron into coproporphyrin III to form Fe-coproporphyrin III. The sequence is that of Coproporphyrin III ferrochelatase from Lacticaseibacillus paracasei (strain ATCC 334 / BCRC 17002 / CCUG 31169 / CIP 107868 / KCTC 3260 / NRRL B-441) (Lactobacillus paracasei).